We begin with the raw amino-acid sequence, 263 residues long: Acyl-[acyl-carrier-protein]--UDP-N-acetylglucosamine O-acyltransferase (263 aa).

The protein belongs to the transferase hexapeptide repeat family. LpxA subfamily. Homotrimer.

The protein localises to the cytoplasm. The enzyme catalyses a (3R)-hydroxyacyl-[ACP] + UDP-N-acetyl-alpha-D-glucosamine = a UDP-3-O-[(3R)-3-hydroxyacyl]-N-acetyl-alpha-D-glucosamine + holo-[ACP]. It functions in the pathway glycolipid biosynthesis; lipid IV(A) biosynthesis; lipid IV(A) from (3R)-3-hydroxytetradecanoyl-[acyl-carrier-protein] and UDP-N-acetyl-alpha-D-glucosamine: step 1/6. Functionally, involved in the biosynthesis of lipid A, a phosphorylated glycolipid that anchors the lipopolysaccharide to the outer membrane of the cell. This is Acyl-[acyl-carrier-protein]--UDP-N-acetylglucosamine O-acyltransferase from Stenotrophomonas maltophilia (strain K279a).